A 192-amino-acid chain; its full sequence is Fanconi anemia core complex-associated protein 20 (192 aa).

The span at 1-16 (MEATRRSRLSLSRRRP) shows a compositional bias: basic residues. Disordered regions lie at residues 1 to 34 (MEAT…PDGG) and 51 to 151 (LNVD…SSVD). Basic and acidic residues predominate over residues 66 to 76 (QEPRRSPERPP). Residues serine 119 and serine 149 each carry the phosphoserine modification. Positions 132 to 149 (PSAEEQPSEEQPSQRQSS) are enriched in low complexity. A UBZ2-type zinc finger spans residues 156 to 192 (LQSCPMCQVDFAPGLAQLDIDGHLAQCLADSTDDIEW). Zn(2+) is bound by residues cysteine 159, cysteine 162, histidine 178, and cysteine 182.

As to quaternary structure, component of the Fanconi anemia (FA) complex. Interacts with FANCA; interaction is direct. Interacts with REV1.

The protein resides in the nucleus. The protein localises to the chromosome. Its function is as follows. Component of the Fanconi anemia (FA) complex required to recruit the FA complex to DNA interstrand cross-links (ICLs) and promote ICLs repair. Following DNA damage recognizes and binds 'Lys-63'-linked ubiquitin generated by RNF8 at ICLs and recruits other components of the FA complex. Promotes translesion synthesis via interaction with REV1. The protein is Fanconi anemia core complex-associated protein 20 of Bos taurus (Bovine).